The chain runs to 431 residues: Putative transcription factor R429 (431 aa).

Residues 28-95 adopt a coiled-coil conformation; it reads NKFENMSKAL…SIENCSESLD (68 aa). The disordered stretch occupies residues 142–187; it reads SQQENSSESNNDIVKNGTGGSTSKRKKIQPSNRCSGSKTGKVTETK. A compositionally biased stretch (low complexity) spans 143–152; that stretch reads QQENSSESNN. A compositionally biased stretch (polar residues) spans 170–181; sequence QPSNRCSGSKTG. Residues 218–241 fold into a zinc finger; sequence CSVPDCDGEKILNQNDGYMVCKKC.

It belongs to the nucleo-cytoplasmic large DNA viruses (NCLDVs) VLTF-3 family.

Putative transcription factor. This chain is Putative transcription factor R429, found in Acanthamoeba polyphaga (Amoeba).